We begin with the raw amino-acid sequence, 251 residues long: Flap endonuclease Xni (251 aa).

Asp-104 is a binding site for Mg(2+). One can recognise a 5'-3' exonuclease domain in the interval 160–249; it reads VTPEQLADYW…LDGNLQQLRL (90 aa). The K(+) site is built by Leu-171, Ala-172, Pro-180, Val-182, and Ile-185. Positions 184-189 are interaction with DNA; the sequence is GIGPKS.

It belongs to the Xni family. Requires Mg(2+) as cofactor. K(+) serves as cofactor.

Functionally, has flap endonuclease activity. During DNA replication, flap endonucleases cleave the 5'-overhanging flap structure that is generated by displacement synthesis when DNA polymerase encounters the 5'-end of a downstream Okazaki fragment. The chain is Flap endonuclease Xni from Klebsiella pneumoniae subsp. pneumoniae (strain ATCC 700721 / MGH 78578).